Consider the following 59-residue polypeptide: Large ribosomal subunit protein bL33 (59 aa).

Positions 26 to 59 are disordered; that stretch reads RYTTTKNKKNNTERLVLKKYNPNLKKHTEHKEIK.

This sequence belongs to the bacterial ribosomal protein bL33 family.

The sequence is that of Large ribosomal subunit protein bL33 from Chlorobium phaeobacteroides (strain BS1).